A 508-amino-acid polypeptide reads, in one-letter code: Mitochondrial distribution and morphology protein 10 (508 aa).

Positions 160-195 are disordered; sequence PAHPTSTRPTPPQTPPSHTRQPSEPSTPAPSPTPGN.

This sequence belongs to the MDM10 family. As to quaternary structure, component of the ER-mitochondria encounter structure (ERMES) or MDM complex, composed of MMM1, MDM10, MDM12 and MDM34. Associates with the mitochondrial outer membrane sorting assembly machinery SAM(core) complex.

The protein localises to the mitochondrion outer membrane. Functionally, component of the ERMES/MDM complex, which serves as a molecular tether to connect the endoplasmic reticulum and mitochondria. Components of this complex are involved in the control of mitochondrial shape and protein biogenesis and may function in phospholipid exchange. MDM10 is involved in the late assembly steps of the general translocase of the mitochondrial outer membrane (TOM complex). Functions in the TOM40-specific route of the assembly of outer membrane beta-barrel proteins, including the association of TOM40 with the receptor TOM22 and small TOM proteins. Can associate with the SAM(core) complex as well as the MDM12-MMM1 complex, both involved in late steps of the major beta-barrel assembly pathway, that is responsible for biogenesis of all outer membrane beta-barrel proteins. May act as a switch that shuttles between both complexes and channels precursor proteins into the TOM40-specific pathway. Plays a role in mitochondrial morphology and in the inheritance of mitochondria. This chain is Mitochondrial distribution and morphology protein 10, found in Cryptococcus neoformans var. neoformans serotype D (strain JEC21 / ATCC MYA-565) (Filobasidiella neoformans).